A 306-amino-acid polypeptide reads, in one-letter code: Protoheme IX farnesyltransferase (306 aa).

The next 9 helical transmembrane spans lie at 32 to 52 (VVQL…PGMP), 57 to 77 (WALM…AAAF), 108 to 128 (LLFS…WVNP), 129 to 149 (LTMW…TVIL), 157 to 177 (IVIG…AMTG), 183 to 203 (ALIL…ALAL), 230 to 250 (VFLY…YGMS), 252 to 272 (WIYL…GFRL), and 285 to 305 (FRFS…DHYL).

The protein belongs to the UbiA prenyltransferase family. Protoheme IX farnesyltransferase subfamily.

The protein localises to the cell inner membrane. It catalyses the reaction heme b + (2E,6E)-farnesyl diphosphate + H2O = Fe(II)-heme o + diphosphate. The protein operates within porphyrin-containing compound metabolism; heme O biosynthesis; heme O from protoheme: step 1/1. Functionally, converts heme B (protoheme IX) to heme O by substitution of the vinyl group on carbon 2 of heme B porphyrin ring with a hydroxyethyl farnesyl side group. The polypeptide is Protoheme IX farnesyltransferase (Acidovorax ebreus (strain TPSY) (Diaphorobacter sp. (strain TPSY))).